The primary structure comprises 122 residues: Large ribosomal subunit protein uL14 (122 aa).

This sequence belongs to the universal ribosomal protein uL14 family. Part of the 50S ribosomal subunit. Forms a cluster with proteins L3 and L19. In the 70S ribosome, L14 and L19 interact and together make contacts with the 16S rRNA in bridges B5 and B8.

Binds to 23S rRNA. Forms part of two intersubunit bridges in the 70S ribosome. The chain is Large ribosomal subunit protein uL14 from Methylobacterium sp. (strain 4-46).